The following is a 529-amino-acid chain: Peptide chain release factor 3 (529 aa).

A tr-type G domain is found at 11–280 (SKRRTFAIIS…GLTEWAPAPK (270 aa)). GTP is bound by residues 20 to 27 (SHPDAGKT), 88 to 92 (DTPGH), and 142 to 145 (NKLD).

It belongs to the TRAFAC class translation factor GTPase superfamily. Classic translation factor GTPase family. PrfC subfamily.

It localises to the cytoplasm. Increases the formation of ribosomal termination complexes and stimulates activities of RF-1 and RF-2. It binds guanine nucleotides and has strong preference for UGA stop codons. It may interact directly with the ribosome. The stimulation of RF-1 and RF-2 is significantly reduced by GTP and GDP, but not by GMP. This is Peptide chain release factor 3 from Vibrio parahaemolyticus serotype O3:K6 (strain RIMD 2210633).